The sequence spans 530 residues: UPF0422 protein lpp3030 (530 aa).

The first 19 residues, 1 to 19 (MKFKKIILALACLSSPLYA), serve as a signal peptide directing secretion. Residues 20 to 66 (DQDQQLKSEIQRLQHQAEDLQAQLNRLQKQLANHKSSQQKHEQQAAA) adopt a coiled-coil conformation. Residues 50-81 (LANHKSSQQKHEQQAAAKPAEPKSKPTTKSGA) form a disordered region. Residues 63 to 79 (QAAAKPAEPKSKPTTKS) show a composition bias toward low complexity.

The protein belongs to the UPF0422 family.

In Legionella pneumophila (strain Paris), this protein is UPF0422 protein lpp3030.